Here is a 475-residue protein sequence, read N- to C-terminus: Polyphosphate:AMP phosphotransferase (475 aa).

PPK2 stretches follow at residues 18–222 (LDLI…LTAL) and 256–472 (ANYK…KADR).

The protein belongs to the polyphosphate kinase 2 (PPK2) family. Class II subfamily. As to quaternary structure, homodimer and homotetramer. It depends on Mg(2+) as a cofactor.

The catalysed reaction is [phosphate](n) + ADP = [phosphate](n+1) + AMP. Uses inorganic polyphosphate (polyP) as a donor to convert AMP to ADP. Can also use GMP, UMP, CMP, TMP or deoxyribonucleoside monophosphates, with lower efficiency. Cannot use low-molecular weight polyP as donors. Can also catalyze the synthesis of polyP from ADP or GDP, with lower efficiency. This is Polyphosphate:AMP phosphotransferase from Acinetobacter johnsonii.